Consider the following 437-residue polypeptide: Serine carboxypeptidase-like 9 (437 aa).

The N-terminal stretch at 1–21 (MSLILKFMLLILLVSSHHVRS) is a signal peptide. N-linked (GlcNAc...) asparagine glycosylation is present at Asn101. Ser175 is a catalytic residue. Disulfide bonds link Cys243/Cys257 and Cys281/Cys293. 2 N-linked (GlcNAc...) asparagine glycosylation sites follow: Asn307 and Asn346. Asp362 is an active-site residue. The N-linked (GlcNAc...) asparagine glycan is linked to Asn378. The active site involves His415.

The protein belongs to the peptidase S10 family. As to expression, expressed in seedlings, leaves, flowers and siliques.

The protein localises to the secreted. The enzyme catalyses 2 1-O-(trans-sinapoyl)-beta-D-glucose = 1,2-di-O-sinapoyl beta-D-glucose + D-glucose. In terms of biological role, catalyzes the formation of 1,2-bis-O-sinapoyl beta-D-glucoside and an unidentified compound 1. The protein is Serine carboxypeptidase-like 9 (SCPL9) of Arabidopsis thaliana (Mouse-ear cress).